A 376-amino-acid chain; its full sequence is Protein-arginine rhamnosyltransferase (376 aa).

Residues Asn-13–Asp-16, Tyr-192, Met-252–Gln-254, and Arg-270–Ser-274 each bind dTDP-beta-L-rhamnose. Tyr-14–Gly-15 lines the dTDP pocket. The Proton acceptor role is filled by Asp-16. DTDP-binding positions include Tyr-192, Met-252–Gln-254, and Arg-270–Ser-274. Residue Glu-272 is part of the active site.

Belongs to the glycosyltransferase 104 family.

It carries out the reaction dTDP-beta-L-rhamnose + L-arginyl-[protein] = N(omega)-(alpha-L-rhamnosyl)-L-arginyl-[protein] + dTDP + H(+). Protein-arginine rhamnosyltransferase that catalyzes the transfer of a single rhamnose to elongation factor P (EF-P) on 'Lys-32', a modification required for EF-P-dependent rescue of polyproline stalled ribosomes. This Pseudomonas aeruginosa (strain ATCC 15692 / DSM 22644 / CIP 104116 / JCM 14847 / LMG 12228 / 1C / PRS 101 / PAO1) protein is Protein-arginine rhamnosyltransferase.